Consider the following 416-residue polypeptide: Adenylosuccinate synthetase (416 aa).

GTP contacts are provided by residues 13-19 (GDEGKGK) and 41-43 (GHT). The active-site Proton acceptor is the Asp14. 2 residues coordinate Mg(2+): Asp14 and Gly41. Residues 14 to 17 (DEGK), 39 to 42 (NAGH), Thr126, Arg140, Gln220, Thr235, and Arg299 contribute to the IMP site. The Proton donor role is filled by His42. 295-301 (VSTGRKR) contacts substrate. GTP-binding positions include Arg301, 327-329 (KLD), and 405-407 (STS).

This sequence belongs to the adenylosuccinate synthetase family. In terms of assembly, homodimer. The cofactor is Mg(2+).

Its subcellular location is the cytoplasm. The catalysed reaction is IMP + L-aspartate + GTP = N(6)-(1,2-dicarboxyethyl)-AMP + GDP + phosphate + 2 H(+). It functions in the pathway purine metabolism; AMP biosynthesis via de novo pathway; AMP from IMP: step 1/2. Plays an important role in the de novo pathway of purine nucleotide biosynthesis. Catalyzes the first committed step in the biosynthesis of AMP from IMP. This Campylobacter jejuni subsp. jejuni serotype O:23/36 (strain 81-176) protein is Adenylosuccinate synthetase.